The primary structure comprises 267 residues: Adenosine 5'-phosphosulfate reductase (267 aa).

The segment at 1-29 (MPPFATIPATERNSAAQHQDPSPMSQPFD) is disordered. A compositionally biased stretch (polar residues) spans 11-25 (ERNSAAQHQDPSPMS). The [4Fe-4S] cluster site is built by cysteine 139, cysteine 140, cysteine 228, and cysteine 231. Cysteine 256 serves as the catalytic Nucleophile; cysteine thiosulfonate intermediate.

This sequence belongs to the PAPS reductase family. CysH subfamily. It depends on [4Fe-4S] cluster as a cofactor.

The protein localises to the cytoplasm. It catalyses the reaction [thioredoxin]-disulfide + sulfite + AMP + 2 H(+) = adenosine 5'-phosphosulfate + [thioredoxin]-dithiol. The protein operates within sulfur metabolism; hydrogen sulfide biosynthesis; sulfite from sulfate. In terms of biological role, catalyzes the formation of sulfite from adenosine 5'-phosphosulfate (APS) using thioredoxin as an electron donor. This is Adenosine 5'-phosphosulfate reductase from Pseudomonas aeruginosa (strain LESB58).